The primary structure comprises 489 residues: Protein LMBR1L (489 aa).

Residues 1–21 are Extracellular-facing; it reads MEAPDYEVLSVREQLFHERIR. Positions 1–59 are interaction with LGB; sequence MEAPDYEVLSVREQLFHERIRECIISTLLFATLYILCHIFLTRFKKPAEFTTVDDEDAT. An LCN1-binding region spans residues 1–76; the sequence is MEAPDYEVLS…LCTFTLAIAL (76 aa). A helical transmembrane segment spans residues 22-42; the sequence is ECIISTLLFATLYILCHIFLT. Residues 43–66 are Cytoplasmic-facing; it reads RFKKPAEFTTVDDEDATVNKIALE. A helical membrane pass occupies residues 67–87; it reads LCTFTLAIALGAVLLLPFSII. Residues 88-114 lie on the Extracellular side of the membrane; that stretch reads SNEVLLSLPRNYYIQWLNGSLIHGLWN. The chain crosses the membrane as a helical span at residues 115–135; it reads LVFLFSNLSLIFLMPFAYFFT. The Cytoplasmic segment spans residues 136 to 154; the sequence is ESEGFAGSRKGVLGRVYET. The chain crosses the membrane as a helical span at residues 155 to 175; that stretch reads VVMLMLLTLLVLGMVWVASAI. Over 176–196 the chain is Extracellular; it reads VDKNKANRESLYDFWEYYLPY. A helical transmembrane segment spans residues 197-217; the sequence is LYSCISFLGVLLLLVCTPLGL. The Cytoplasmic segment spans residues 218-305; it reads ARMFSVTGKL…NLGYPLAMLC (88 aa). Residues 306–326 form a helical membrane-spanning segment; it reads LLVLTGLSVLIVAIHILELLI. Over 327–350 the chain is Extracellular; the sequence is DEAAMPRGMQGTSLGQVSFSKLGS. A helical transmembrane segment spans residues 351–371; it reads FGAVIQVVLIFYLMVSSVVGF. Topologically, residues 372-388 are cytoplasmic; sequence YSSPLFRSLRPRWHDTA. The chain crosses the membrane as a helical span at residues 389 to 409; the sequence is MTQIIGNCVCLLVLSSALPVF. Over 410–431 the chain is Extracellular; that stretch reads SRTLGLTRFDLLGDFGRFNWLG. A helical transmembrane segment spans residues 432–452; sequence NFYIVFLYNAAFAGLTTLCLV. Over 453–489 the chain is Cytoplasmic; sequence KTFTAAVRAELIRAFGLDRLPLPVSGFPQASRKTQHQ.

It belongs to the LIMR family. In terms of assembly, dimer. Can also form higher oligomers. Interacts with LCN1; this interaction mediates the endocytosis of LCN1. Interacts with UBAC2, FAF2, VCP, AMFR, ZNRF3, CTNNB1, LRP6, GSK3A and GSK3B. Interacts with DVL2 and RNF43. Interaction with SCGB1A1 has been observed in PubMed:16423471, but not in PubMed:23964685. Interaction with LGB which mediates the endocytosis of LGB has been observed in PubMed:17991420, but not in PubMed:23964685. As to expression, expressed in testis, pituitary gland, adrenal gland, trachea, placenta, thymus, cerebellum, stomach, mammary gland, spinal cord. A weaker expression is detected in colon, pancreas, and prostate.

The protein resides in the cell membrane. The protein localises to the endoplasmic reticulum membrane. Its function is as follows. Plays an essential role in lymphocyte development by negatively regulating the canonical Wnt signaling pathway. In association with UBAC2 and E3 ubiquitin-protein ligase AMFR, promotes the ubiquitin-mediated degradation of CTNNB1 and Wnt receptors FZD6 and LRP6. LMBR1L stabilizes the beta-catenin destruction complex that is required for regulating CTNNB1 levels. Acts as a LCN1 receptor and can mediate its endocytosis. In Homo sapiens (Human), this protein is Protein LMBR1L (LMBR1L).